A 262-amino-acid polypeptide reads, in one-letter code: Protein Pcal_0062 (262 aa).

It belongs to the CinA family.

The protein is Protein Pcal_0062 of Pyrobaculum calidifontis (strain DSM 21063 / JCM 11548 / VA1).